Consider the following 616-residue polypeptide: Chaperone protein HscA (616 aa).

The protein belongs to the heat shock protein 70 family.

Its function is as follows. Chaperone involved in the maturation of iron-sulfur cluster-containing proteins. Has a low intrinsic ATPase activity which is markedly stimulated by HscB. Involved in the maturation of IscU. This Salmonella paratyphi B (strain ATCC BAA-1250 / SPB7) protein is Chaperone protein HscA.